The following is a 148-amino-acid chain: Glutamyl-tRNA(Gln) amidotransferase subunit C, mitochondrial (148 aa).

Belongs to the GatC family. Subunit of the heterotrimeric GatCAB amidotransferase (AdT) complex, composed of A, B and C subunits.

The protein localises to the mitochondrion. The enzyme catalyses L-glutamyl-tRNA(Gln) + L-glutamine + ATP + H2O = L-glutaminyl-tRNA(Gln) + L-glutamate + ADP + phosphate + H(+). Functionally, allows the formation of correctly charged Gln-tRNA(Gln) through the transamidation of misacylated Glu-tRNA(Gln) in the mitochondria. The reaction takes place in the presence of glutamine and ATP through an activated gamma-phospho-Glu-tRNA(Gln). This chain is Glutamyl-tRNA(Gln) amidotransferase subunit C, mitochondrial, found in Drosophila yakuba (Fruit fly).